We begin with the raw amino-acid sequence, 206 residues long: MLTAFTAGLLLITVSELGDKTFFIAMILAMRYPRRWVLVGVVGGLAAMTILSVLMGQIFTFLPTRYINYAEVALFLIFGTKLLWDARRIKATANLEEMEDAEKAIASGEKKLKIVPRGWGIVVESFALTFVAEWGDRTQIATIALAASNNAWGVSAGAILGHTICAVIAVMGGKFVAGRISEKTVTLIGGLLFYLFAVVSWWTKIA.

The next 5 helical transmembrane spans lie at 36–56, 58–78, 114–134, 151–171, and 185–205; these read WVLV…VLMG, IFTF…FLIF, IVPR…VAEW, AWGV…IAVM, and VTLI…WTKI.

The protein belongs to the GDT1 family.

It is found in the cell membrane. The sequence is that of GDT1-like protein sll0615 from Synechocystis sp. (strain ATCC 27184 / PCC 6803 / Kazusa).